The sequence spans 615 residues: Mitogen-activated protein kinase 18 (615 aa).

The Protein kinase domain maps to 25–316 (YRILEVIGKG…PAEALADPYF (292 aa)). ATP is bound by residues 31–39 (IGKGSYGVV) and K54. Residue D151 is the Proton acceptor of the active site. T187 is modified (phosphothreonine). The TXY signature appears at 187–189 (TDY). Y189 is subject to Phosphotyrosine. T192 bears the Phosphothreonine mark. Disordered regions lie at residues 414-483 (RSTV…ESSV) and 510-544 (NTMT…PPAA). A compositionally biased stretch (low complexity) spans 415 to 426 (STVHSTVVHSTS). Residues 445-459 (NGASSAGHPSTSAYP) show a composition bias toward polar residues. Residues 464-473 (GPPPRVPPSG) show a composition bias toward pro residues. 2 stretches are compositionally biased toward polar residues: residues 510–522 (NTMT…NIEA) and 532–544 (PVHQ…PPAA).

The protein belongs to the protein kinase superfamily. CMGC Ser/Thr protein kinase family. MAP kinase subfamily. As to quaternary structure, interacts with PHS1. Binds to MAPKKK20. In terms of processing, dually phosphorylated on Thr-187 and Tyr-189, which activates the enzyme. Phosphorylated by MAPKKK20. In terms of tissue distribution, expressed in roots, seedlings, leaves, flower buds, flowers and siliques.

The protein localises to the nucleus. It is found in the cytoplasm. It catalyses the reaction L-seryl-[protein] + ATP = O-phospho-L-seryl-[protein] + ADP + H(+). The enzyme catalyses L-threonyl-[protein] + ATP = O-phospho-L-threonyl-[protein] + ADP + H(+). Activated by threonine and tyrosine phosphorylation. Inactivated by phosphatase PHS1. Its function is as follows. Mitogen-activated protein kinase (MAPK) that is specifically regulated by PHS1 and MAPKKK20 and mediates signaling that regulates cortical microtubule functions, maybe through regulation of microtubule dynamic instability. In Arabidopsis thaliana (Mouse-ear cress), this protein is Mitogen-activated protein kinase 18.